The primary structure comprises 301 residues: Glutamyl-Q tRNA(Asp) synthetase (301 aa).

L-glutamate is bound by residues 9–13 and Glu-45; that span reads RFAPS. A 'HIGH' region motif is present at residues 12-22; it reads PSPTGPLHLGS. Zn(2+) is bound by residues Cys-101, Cys-103, Tyr-121, and Cys-125. The L-glutamate site is built by Tyr-179 and Arg-197. Positions 235–239 match the 'KMSKS' region motif; that stretch reads KLSKQ. Residue Lys-238 participates in ATP binding.

The protein belongs to the class-I aminoacyl-tRNA synthetase family. GluQ subfamily. The cofactor is Zn(2+).

In terms of biological role, catalyzes the tRNA-independent activation of glutamate in presence of ATP and the subsequent transfer of glutamate onto a tRNA(Asp). Glutamate is transferred on the 2-amino-5-(4,5-dihydroxy-2-cyclopenten-1-yl) moiety of the queuosine in the wobble position of the QUC anticodon. The polypeptide is Glutamyl-Q tRNA(Asp) synthetase (Thiobacillus denitrificans (strain ATCC 25259 / T1)).